Consider the following 268-residue polypeptide: Zygote formation protein zyg1 (268 aa).

Its function is as follows. Plays an essential role in zygote formation by inducing sexual cell fusion. Overexpressing cells eventually formed many loose mounds, in which giant multinucleate cells were surrounded by normal-sized cells. The polypeptide is Zygote formation protein zyg1 (zyg1) (Dictyostelium mucoroides (Slime mold)).